The sequence spans 2595 residues: Glucosylceramide transporter ABCA12 (2595 aa).

A helical transmembrane segment spans residues 23–43 (PLWTLVLILWPVIIFIILAIT). 19 N-linked (GlcNAc...) asparagine glycosylation sites follow: N156, N174, N214, N275, N333, N367, N383, N412, N435, N528, N543, N577, N608, N623, N648, N752, N826, N920, and N963. 3 consecutive transmembrane segments (helical) span residues 1065–1085 (VSYS…AAFV), 1112–1132 (FAWL…LIII), and 1145–1165 (FILF…SYLI). N-linked (GlcNAc...) asparagine glycosylation occurs at N1170. 3 helical membrane-spanning segments follow: residues 1174-1194 (IAAL…IVLV), 1200-1220 (LSYV…SYAS), and 1250-1270 (FGWL…IAWY). The ABC transporter 1 domain occupies 1346-1577 (VALHGVTKIY…FGDGYHLTLT (232 aa)). 1378 to 1385 (GPNGAGKT) contributes to the ATP binding site. Residues N1524, N1663, and N1704 are each glycosylated (N-linked (GlcNAc...) asparagine). Residues 1747 to 1767 (LIAQVILPIVFVTTAMGLGTL) form a helical membrane-spanning segment. N1769, N1819, N1835, N1876, N1921, and N1952 each carry an N-linked (GlcNAc...) asparagine glycan. The next 4 membrane-spanning stretches (helical) occupy residues 1979–1999 (ATIS…GYSV), 2035–2055 (FIYD…IIAI), 2072–2092 (LLLL…AGLF), and 2103–2123 (VCVN…VYFL). N2178 is a glycosylation site (N-linked (GlcNAc...) asparagine). The helical transmembrane segment at 2187–2207 (GAMFVALVSQGTMFFSLRLLI) threads the bilayer. 2 N-linked (GlcNAc...) asparagine glycosylation sites follow: N2208 and N2223. The 236-residue stretch at 2254 to 2489 (VQLYCLTKTY…FGRGFTVKVH (236 aa)) folds into the ABC transporter 2 domain. Residues 2270–2290 (IIAVNNISIGIPAGECFGLLG) form a helical membrane-spanning segment. 2290-2297 (GVNGAGKT) provides a ligand contact to ATP. N2318, N2542, and N2547 each carry an N-linked (GlcNAc...) asparagine glycan. Residues 2571–2595 (SYETADTSSQGSTISVDSQDDQMES) form a disordered region. Polar residues predominate over residues 2574–2587 (TADTSSQGSTISVD).

The protein belongs to the ABC transporter superfamily. ABCA family. As to quaternary structure, interacts with NR1H2 and ABCA1; this interaction is required for ABCA1 localization to the cell surface and is necessary for its normal activity and stability. As to expression, mainly expressed in the stomach, placenta, testis and fetal brain. Expressed in the upper epidermal layers, mainly the granular layers, of skin. Expressed throughout the normal interfollicular epidermis with prominent expression in the stratum granulosum. Expressed in alpha and beta cells of pancreatic islets.

The protein localises to the cytoplasmic vesicle. It localises to the secretory vesicle membrane. It is found in the golgi apparatus membrane. It catalyses the reaction ATP + H2O + phospholipidSide 1 = ADP + phosphate + phospholipidSide 2.. The catalysed reaction is a beta-D-glucosylceramide(in) + ATP + H2O = a beta-D-glucosylceramide(out) + ADP + phosphate + H(+). Transports lipids such as glucosylceramides from the outer to the inner leaflet of lamellar granules (LGs) membrane, whereby the lipids are finally transported to the keratinocyte periphery via the trans-Golgi network and LGs and released to the apical surface of the granular keratinocytes to form lipid lamellae in the stratum corneum of the epidermis, which is essential for skin barrier function. In the meantime, participates in the transport of the lamellar granules-associated proteolytic enzymes, in turn regulates desquamation and keratinocyte differentiation. Furthermore, is essential for the regulation of cellular cholesterol homeostasis by regulating ABCA1-dependent cholesterol efflux from macrophages through interaction with NR1H2 and ABCA1. Plays pleiotropic roles in regulating glucose stimulated insulin secretion from beta cells, regulating the morphology and fusion of insulin granules, lipid raft abundance and the actin cytoskeleton. Also involved in lung surfactant biogenesis. This Homo sapiens (Human) protein is Glucosylceramide transporter ABCA12.